The sequence spans 208 residues: Cysteine-rich protein 2 (208 aa).

The region spanning 5-57 (CPKCDKTVCFAEKVSSLGKDWHKFCLKCERCSKTLTPGGHAEHDGKPFCHKPC) is the LIM zinc-binding 1 domain. K23 is subject to N6-acetyllysine. A disordered region spans residues 98 to 119 (AEERKASGPPKGPSRASSVTTF). The residue at position 104 (S104) is a Phosphoserine. The LIM zinc-binding 2 domain maps to 126-178 (CPRCSKKVYFAEKVTSLGKDWHRPCLHCERCGKTLTPGGHAEHDGQPYCHKPC). N6-acetyllysine is present on residues K138 and K144.

In terms of assembly, interacts with TGFB1I1.

The protein is Cysteine-rich protein 2 (CRIP2) of Pongo abelii (Sumatran orangutan).